Reading from the N-terminus, the 1343-residue chain is DNA-directed RNA polymerase subunit beta (1343 aa).

This sequence belongs to the RNA polymerase beta chain family. In terms of assembly, the RNAP catalytic core consists of 2 alpha, 1 beta, 1 beta' and 1 omega subunit. When a sigma factor is associated with the core the holoenzyme is formed, which can initiate transcription.

The catalysed reaction is RNA(n) + a ribonucleoside 5'-triphosphate = RNA(n+1) + diphosphate. DNA-dependent RNA polymerase catalyzes the transcription of DNA into RNA using the four ribonucleoside triphosphates as substrates. This chain is DNA-directed RNA polymerase subunit beta, found in Shewanella sediminis (strain HAW-EB3).